The sequence spans 72 residues: Mitotic-spindle organizing protein 1 (72 aa).

It belongs to the MOZART1 family. As to quaternary structure, part of the gamma-tubulin complex.

It localises to the cytoplasm. Its subcellular location is the cytoskeleton. It is found in the microtubule organizing center. The protein localises to the centrosome. The protein resides in the spindle. Required for gamma-tubulin complex recruitment to the centrosome. The chain is Mitotic-spindle organizing protein 1 (mzt1) from Xenopus laevis (African clawed frog).